The primary structure comprises 690 residues: Elongation factor G (690 aa).

The region spanning 8 to 283 (EDYRNFGIMA…AVVDYLPSPL (276 aa)) is the tr-type G domain. Residues 17-24 (AHIDAGKT), 81-85 (DTPGH), and 135-138 (NKMD) each bind GTP.

The protein belongs to the TRAFAC class translation factor GTPase superfamily. Classic translation factor GTPase family. EF-G/EF-2 subfamily.

The protein localises to the cytoplasm. In terms of biological role, catalyzes the GTP-dependent ribosomal translocation step during translation elongation. During this step, the ribosome changes from the pre-translocational (PRE) to the post-translocational (POST) state as the newly formed A-site-bound peptidyl-tRNA and P-site-bound deacylated tRNA move to the P and E sites, respectively. Catalyzes the coordinated movement of the two tRNA molecules, the mRNA and conformational changes in the ribosome. The chain is Elongation factor G from Rhodopseudomonas palustris (strain ATCC BAA-98 / CGA009).